A 264-amino-acid polypeptide reads, in one-letter code: uncharacterized protein (264 aa).

The tract at residues 57–264 (RPPASPCPPR…VYPHPHLTAT (208 aa)) is disordered. Basic residues predominate over residues 140-153 (GKARRSPGRRRHPH). Over residues 154 to 165 (SSFPQASSPSSP) the composition is skewed to low complexity.

This is an uncharacterized protein from Homo sapiens (Human).